The following is a 745-amino-acid chain: Probable endochitinase ARB_07371 (745 aa).

Positions 1 to 23 are cleaved as a signal peptide; that stretch reads MALPKTIMAFIAFISFLVSTTFA. The 322-residue stretch at 30–351 folds into the GH18 domain; that stretch reads TNVVTYWGQG…SNIKRLLLNN (322 aa). The active-site Proton donor is the Glu-178. Disordered stretches follow at residues 351-372 and 395-446; these read NDPS…SMST and WSMP…TTEI. Positions 357 to 372 are enriched in low complexity; the sequence is TTTSKTMSSTKTSMST. N-linked (GlcNAc...) asparagine glycosylation is found at Asn-438 and Asn-484. Positions 651 to 715 are disordered; the sequence is SEPMTPTQVP…EMGGNGGDRT (65 aa). Gly-720 carries the GPI-anchor amidated glycine lipid modification. Positions 721–745 are cleaved as a propeptide — removed in mature form; sequence GAGVVSPSFSVVVIVLGSIVYHIMQ.

This sequence belongs to the glycosyl hydrolase 18 family. Chitinase class III subfamily.

Its subcellular location is the cell membrane. It is found in the secreted. The protein localises to the cell wall. It catalyses the reaction Random endo-hydrolysis of N-acetyl-beta-D-glucosaminide (1-&gt;4)-beta-linkages in chitin and chitodextrins.. Its function is as follows. GPI-anchored chitinase involved in the degradation of chitin, a component of the cell walls of fungi and exoskeletal elements of some animals (including worms and arthropods). Required to reshape the cell wall at the sites where cell wall remodeling and/or cell wall maturation actively take place such as sites of conidia formation. The sequence is that of Probable endochitinase ARB_07371 from Arthroderma benhamiae (strain ATCC MYA-4681 / CBS 112371) (Trichophyton mentagrophytes).